The chain runs to 248 residues: Probable transcriptional regulatory protein Acid_5948 (248 aa).

This sequence belongs to the TACO1 family.

It localises to the cytoplasm. The polypeptide is Probable transcriptional regulatory protein Acid_5948 (Solibacter usitatus (strain Ellin6076)).